The chain runs to 452 residues: Proline--tRNA ligase (452 aa).

This sequence belongs to the class-II aminoacyl-tRNA synthetase family. ProS type 2 subfamily. In terms of assembly, homodimer.

It is found in the cytoplasm. The enzyme catalyses tRNA(Pro) + L-proline + ATP = L-prolyl-tRNA(Pro) + AMP + diphosphate. Its function is as follows. Catalyzes the attachment of proline to tRNA(Pro) in a two-step reaction: proline is first activated by ATP to form Pro-AMP and then transferred to the acceptor end of tRNA(Pro). The chain is Proline--tRNA ligase from Jannaschia sp. (strain CCS1).